Reading from the N-terminus, the 258-residue chain is Ubiquinone/menaquinone biosynthesis C-methyltransferase UbiE (258 aa).

S-adenosyl-L-methionine is bound by residues threonine 83, aspartate 104, and 130 to 131 (DA).

Belongs to the class I-like SAM-binding methyltransferase superfamily. MenG/UbiE family.

The enzyme catalyses a 2-demethylmenaquinol + S-adenosyl-L-methionine = a menaquinol + S-adenosyl-L-homocysteine + H(+). It carries out the reaction a 2-methoxy-6-(all-trans-polyprenyl)benzene-1,4-diol + S-adenosyl-L-methionine = a 5-methoxy-2-methyl-3-(all-trans-polyprenyl)benzene-1,4-diol + S-adenosyl-L-homocysteine + H(+). It participates in quinol/quinone metabolism; menaquinone biosynthesis; menaquinol from 1,4-dihydroxy-2-naphthoate: step 2/2. Its pathway is cofactor biosynthesis; ubiquinone biosynthesis. Methyltransferase required for the conversion of demethylmenaquinol (DMKH2) to menaquinol (MKH2) and the conversion of 2-polyprenyl-6-methoxy-1,4-benzoquinol (DDMQH2) to 2-polyprenyl-3-methyl-6-methoxy-1,4-benzoquinol (DMQH2). This chain is Ubiquinone/menaquinone biosynthesis C-methyltransferase UbiE, found in Bordetella bronchiseptica (strain ATCC BAA-588 / NCTC 13252 / RB50) (Alcaligenes bronchisepticus).